Consider the following 493-residue polypeptide: Polyamine aminopropyltransferase 2 (493 aa).

A run of 7 helical transmembrane segments spans residues 9-29 (LCIF…ATLA), 32-52 (LLGN…LSMG), 68-88 (LAFV…VPIA), 101-121 (VIYG…PLAV), 137-157 (VLEK…YLFL), 161-181 (GLPL…FLLV), and 188-208 (KFLK…AVGH). The segment at 187–448 (KKFLKFLAIF…PLNFENFELK (262 aa)) is spermidine synthase. The PABS domain occupies 202–437 (ATYAVGHKRI…GEWGMVIGSK (236 aa)). Residue Q233 participates in S-methyl-5'-thioadenosine binding. The spermidine site is built by H263 and D287. S-methyl-5'-thioadenosine is bound by residues D306 and 340 to 341 (DA). D358 acts as the Proton acceptor in catalysis.

This sequence belongs to the spermidine/spermine synthase family. Homodimer or homotetramer.

The protein resides in the cell membrane. It catalyses the reaction S-adenosyl 3-(methylsulfanyl)propylamine + putrescine = S-methyl-5'-thioadenosine + spermidine + H(+). The protein operates within amine and polyamine biosynthesis; spermidine biosynthesis; spermidine from putrescine: step 1/1. Catalyzes the irreversible transfer of a propylamine group from the amino donor S-adenosylmethioninamine (decarboxy-AdoMet) to putrescine (1,4-diaminobutane) to yield spermidine. The sequence is that of Polyamine aminopropyltransferase 2 from Aquifex aeolicus (strain VF5).